Here is a 425-residue protein sequence, read N- to C-terminus: Serine--tRNA ligase (425 aa).

230-232 (TAE) contacts L-serine. An ATP-binding site is contributed by 261 to 263 (RSE). Glutamate 284 provides a ligand contact to L-serine. 348–351 (EISS) contributes to the ATP binding site. An L-serine-binding site is contributed by serine 384.

It belongs to the class-II aminoacyl-tRNA synthetase family. Type-1 seryl-tRNA synthetase subfamily. In terms of assembly, homodimer. The tRNA molecule binds across the dimer.

The protein localises to the cytoplasm. It carries out the reaction tRNA(Ser) + L-serine + ATP = L-seryl-tRNA(Ser) + AMP + diphosphate + H(+). The catalysed reaction is tRNA(Sec) + L-serine + ATP = L-seryl-tRNA(Sec) + AMP + diphosphate + H(+). Its pathway is aminoacyl-tRNA biosynthesis; selenocysteinyl-tRNA(Sec) biosynthesis; L-seryl-tRNA(Sec) from L-serine and tRNA(Sec): step 1/1. Its function is as follows. Catalyzes the attachment of serine to tRNA(Ser). Is also able to aminoacylate tRNA(Sec) with serine, to form the misacylated tRNA L-seryl-tRNA(Sec), which will be further converted into selenocysteinyl-tRNA(Sec). The sequence is that of Serine--tRNA ligase from Streptococcus pyogenes serotype M4 (strain MGAS10750).